An 88-amino-acid polypeptide reads, in one-letter code: Small ribosomal subunit protein bS16c (88 aa).

It belongs to the bacterial ribosomal protein bS16 family.

It is found in the plastid. The protein localises to the chloroplast. The sequence is that of Small ribosomal subunit protein bS16c from Helianthus annuus (Common sunflower).